The following is a 352-amino-acid chain: Chalcone synthase C (352 aa).

The active site involves Cys-170.

The protein belongs to the thiolase-like superfamily. Chalcone/stilbene synthases family.

The enzyme catalyses (E)-4-coumaroyl-CoA + 3 malonyl-CoA + 3 H(+) = 2',4,4',6'-tetrahydroxychalcone + 3 CO2 + 4 CoA. It functions in the pathway secondary metabolite biosynthesis; flavonoid biosynthesis. In terms of biological role, the primary product of this enzyme is 4,2',4',6'-tetrahydroxychalcone (also termed naringenin-chalcone or chalcone) which can under specific conditions spontaneously isomerize into naringenin. The chain is Chalcone synthase C (CHSC) from Ipomoea purpurea (Common morning glory).